The sequence spans 301 residues: ATP synthase subunit gamma, mitochondrial (301 aa).

The protein belongs to the ATPase gamma chain family. F-type ATPases have 2 components, CF(1) - the catalytic core - and CF(0) - the membrane proton channel. CF(1) has five subunits: alpha(3), beta(3), gamma(1), delta(1), epsilon(1). CF(0) has three main subunits: a, b and c.

The protein localises to the mitochondrion. It localises to the mitochondrion inner membrane. Its function is as follows. Mitochondrial membrane ATP synthase (F(1)F(0) ATP synthase or Complex V) produces ATP from ADP in the presence of a proton gradient across the membrane which is generated by electron transport complexes of the respiratory chain. F-type ATPases consist of two structural domains, F(1) - containing the extramembraneous catalytic core, and F(0) - containing the membrane proton channel, linked together by a central stalk and a peripheral stalk. During catalysis, ATP synthesis in the catalytic domain of F(1) is coupled via a rotary mechanism of the central stalk subunits to proton translocation. Part of the complex F(1) domain and the central stalk which is part of the complex rotary element. The gamma subunit protrudes into the catalytic domain formed of alpha(3)beta(3). Rotation of the central stalk against the surrounding alpha(3)beta(3) subunits leads to hydrolysis of ATP in three separate catalytic sites on the beta subunits. The chain is ATP synthase subunit gamma, mitochondrial (atp3) from Schizosaccharomyces pombe (strain 972 / ATCC 24843) (Fission yeast).